A 224-amino-acid polypeptide reads, in one-letter code: Uracil phosphoribosyltransferase (224 aa).

R92 serves as a coordination point for 5-phospho-alpha-D-ribose 1-diphosphate. K109 lines the GTP pocket. Residues R117 and 145–153 (DPMLATGGT) contribute to the 5-phospho-alpha-D-ribose 1-diphosphate site. Residues I210 and 215-217 (GDA) each bind uracil. Residue D216 coordinates 5-phospho-alpha-D-ribose 1-diphosphate.

This sequence belongs to the UPRTase family. Mg(2+) is required as a cofactor.

It carries out the reaction UMP + diphosphate = 5-phospho-alpha-D-ribose 1-diphosphate + uracil. It participates in pyrimidine metabolism; UMP biosynthesis via salvage pathway; UMP from uracil: step 1/1. Its activity is regulated as follows. Allosterically activated by GTP. Catalyzes the conversion of uracil and 5-phospho-alpha-D-ribose 1-diphosphate (PRPP) to UMP and diphosphate. In Nicotiana tabacum (Common tobacco), this protein is Uracil phosphoribosyltransferase (UPP).